Reading from the N-terminus, the 489-residue chain is Monocarboxylate transporter 2 (489 aa).

The Cytoplasmic portion of the chain corresponds to 1–21 (MPSESSVKATAAPPPFPLPPD). Residues 22–42 (GGWGWVVVCASFISIGFSYAF) traverse the membrane as a helical segment. At 43–65 (PKAVTVFFNDIKDIFKTTSSQIA) the chain is on the extracellular side. A helical transmembrane segment spans residues 66-86 (WISSIMLAVMYAGGPISSVLV). Over 87-95 (NNYGSRPVV) the chain is Cytoplasmic. The chain crosses the membrane as a helical span at residues 96 to 116 (IVGGLLCCTGMILASFSSSVI). Residues 117–121 (ELYLT) lie on the Extracellular side of the membrane. The chain crosses the membrane as a helical span at residues 122–142 (VGFIGGLGLAFNLQPALTIIG). Residues 143–154 (KYFYRKRPLANG) are Cytoplasmic-facing. A helical transmembrane segment spans residues 155-175 (FAMAGSPVFLSTLAPFNQFLF). The Extracellular portion of the chain corresponds to 176–179 (NSYG). A helical transmembrane segment spans residues 180 to 200 (WKGSFLILGAIFLHSCVAGCL). Residues 201 to 250 (MRPVGPSPRAAKSKSKVGSRQDSSTKRLSKVSTAEKINRFLDFGLFTHRG) lie on the Cytoplasmic side of the membrane. Residues 206-227 (PSPRAAKSKSKVGSRQDSSTKR) are disordered. The chain crosses the membrane as a helical span at residues 251-271 (FLIYLSGNVVLFLGMFAPIIF). The Extracellular segment spans residues 272–286 (LAPYAKDKGVDDYNS). Residues 287 to 307 (AFLLSVMAFTDMFARPSVGLI) traverse the membrane as a helical segment. Residues 308–316 (ANTSLIRPR) are Cytoplasmic-facing. A helical membrane pass occupies residues 317-337 (IQYLFSVAIMFTGICHLLCPL). Over 338-342 (AHSYT) the chain is Extracellular. A helical membrane pass occupies residues 343-363 (ALVVYVIFFGIGFGSISSLLF). Over 364–377 (ECLMDQVGASRFSS) the chain is Cytoplasmic. A helical membrane pass occupies residues 378–398 (AVGLVTIVECCPVLFGPPLAG). Over 399–410 (KLLDITGQYKYL) the chain is Extracellular. The helical transmembrane segment at 411–431 (YIASGIVVLSSGIYLLICNAI) threads the bilayer. Topologically, residues 432 to 489 (NYRLLEKERKREKARRKKSASQASKEMEALSRSKQDDVTVKVSNTHNPPSDRDKESSI) are cytoplasmic. The tract at residues 441–489 (KREKARRKKSASQASKEMEALSRSKQDDVTVKVSNTHNPPSDRDKESSI) is disordered. Composition is skewed to basic and acidic residues over residues 456–470 (KEME…DDVT) and 480–489 (PSDRDKESSI).

It belongs to the major facilitator superfamily. Monocarboxylate porter (TC 2.A.1.13) family. As to quaternary structure, homodimer. Interacts with GRID2IP. Interacts with EMB; interaction mediates SLC16A7 targeting to the plasma membrane. Interacts with isoform 2 of BSG. In terms of tissue distribution, detected in brain and kidney (at protein level).

It is found in the cell membrane. The protein resides in the basolateral cell membrane. It localises to the cytoplasm. The enzyme catalyses 3-methyl-2-oxobutanoate(out) + H(+)(out) = 3-methyl-2-oxobutanoate(in) + H(+)(in). It carries out the reaction (S)-lactate(in) + H(+)(in) = (S)-lactate(out) + H(+)(out). The catalysed reaction is acetoacetate(out) + H(+)(out) = acetoacetate(in) + H(+)(in). It catalyses the reaction (R)-3-hydroxybutanoate(out) + H(+)(out) = (R)-3-hydroxybutanoate(in) + H(+)(in). The enzyme catalyses 4-methyl-2-oxopentanoate(out) + H(+)(out) = 4-methyl-2-oxopentanoate(in) + H(+)(in). It carries out the reaction pyruvate(out) + H(+)(out) = pyruvate(in) + H(+)(in). The catalysed reaction is (S)-3-hydroxybutanoate(out) + H(+)(out) = (S)-3-hydroxybutanoate(in) + H(+)(in). With respect to regulation, transport activity exhibits steep dependence on substrate concentration. Substrate concentration sensitivity of SLC16A7 arises from the strong inter-subunit cooperativity of the SLC16A7 dimer during transport. Inhibited by AR-C155858. Proton-coupled monocarboxylate symporter. Catalyzes the rapid transport across the plasma membrane of monocarboxylates such as L-lactate, pyruvate and ketone bodies, acetoacetate, beta-hydroxybutyrate and acetate. Dimerization is functionally required and both subunits work cooperatively in transporting substrate. The protein is Monocarboxylate transporter 2 (Slc16a7) of Rattus norvegicus (Rat).